The primary structure comprises 90 residues: U7-theraphotoxin-Hhn1f (90 aa).

The signal sequence occupies residues 1 to 19; that stretch reads MKTAIFTVVLALAVFAVLS. The propeptide occupies 20 to 50; it reads FGWEANEKALSEEFTELIHEKEAASETEARG. 3 disulfides stabilise this stretch: Cys51/Cys65, Cys58/Cys70, and Cys64/Cys81.

It belongs to the neurotoxin 10 (Hwtx-1) family. 13 (Hntx-13) subfamily. In terms of tissue distribution, expressed by the venom gland.

The protein localises to the secreted. In terms of biological role, ion channel inhibitor. The sequence is that of U7-theraphotoxin-Hhn1f from Cyriopagopus hainanus (Chinese bird spider).